The following is a 276-amino-acid chain: MEEQPLCNLSVKDLMEAGAHFGHQTRRWNPKMKLYIFEEKNGLYIINLAKTLYQLRKALPQVCKVIKENKPILFVGTKKQAKCVIKEAAIEAGEYFVAERWLGGMLTNMTTIRNSIKTLDKIEKDLTQNSSYLTKKEIALLAKRHQKLLKNLEGIRYLKKAPGLVIVVDPSYEKIAVAEAKKLGIPVLALVDTNCDPTPIDYVIPCNDDSLKSIRLIISTIKDSIIDTKKKLGVEIVSPIKTLDIQDSEDMDVYATDEDNRQEDLLAKKYDSNEAN.

The protein belongs to the universal ribosomal protein uS2 family.

The sequence is that of Small ribosomal subunit protein uS2 from Chlamydia abortus (strain DSM 27085 / S26/3) (Chlamydophila abortus).